The chain runs to 320 residues: tRNA dimethylallyltransferase (320 aa).

Gly-17–Thr-24 lines the ATP pocket. Position 19-24 (Thr-19–Thr-24) interacts with substrate. Residues Asp-42–Gln-45 form an interaction with substrate tRNA region.

This sequence belongs to the IPP transferase family. In terms of assembly, monomer. Requires Mg(2+) as cofactor.

The enzyme catalyses adenosine(37) in tRNA + dimethylallyl diphosphate = N(6)-dimethylallyladenosine(37) in tRNA + diphosphate. In terms of biological role, catalyzes the transfer of a dimethylallyl group onto the adenine at position 37 in tRNAs that read codons beginning with uridine, leading to the formation of N6-(dimethylallyl)adenosine (i(6)A). This is tRNA dimethylallyltransferase from Bacillus thuringiensis (strain Al Hakam).